The primary structure comprises 284 residues: Lipoyl synthase (284 aa).

Cysteine 36, cysteine 41, cysteine 47, cysteine 62, cysteine 66, cysteine 69, and serine 273 together coordinate [4Fe-4S] cluster. Positions 48-262 constitute a Radical SAM core domain; sequence WGKGTATFMI…RTIGLKKGFR (215 aa).

Belongs to the radical SAM superfamily. Lipoyl synthase family. [4Fe-4S] cluster is required as a cofactor.

Its subcellular location is the cytoplasm. The enzyme catalyses [[Fe-S] cluster scaffold protein carrying a second [4Fe-4S](2+) cluster] + N(6)-octanoyl-L-lysyl-[protein] + 2 oxidized [2Fe-2S]-[ferredoxin] + 2 S-adenosyl-L-methionine + 4 H(+) = [[Fe-S] cluster scaffold protein] + N(6)-[(R)-dihydrolipoyl]-L-lysyl-[protein] + 4 Fe(3+) + 2 hydrogen sulfide + 2 5'-deoxyadenosine + 2 L-methionine + 2 reduced [2Fe-2S]-[ferredoxin]. It participates in protein modification; protein lipoylation via endogenous pathway; protein N(6)-(lipoyl)lysine from octanoyl-[acyl-carrier-protein]: step 2/2. In terms of biological role, catalyzes the radical-mediated insertion of two sulfur atoms into the C-6 and C-8 positions of the octanoyl moiety bound to the lipoyl domains of lipoate-dependent enzymes, thereby converting the octanoylated domains into lipoylated derivatives. The polypeptide is Lipoyl synthase (Phocaeicola vulgatus (strain ATCC 8482 / DSM 1447 / JCM 5826 / CCUG 4940 / NBRC 14291 / NCTC 11154) (Bacteroides vulgatus)).